We begin with the raw amino-acid sequence, 837 residues long: Thioredoxin domain-containing protein 3 homolog (837 aa).

The Thioredoxin domain occupies 6–115 (EQIQLQKEIL…LKNVERELKQ (110 aa)). A disulfide bond links Cys39 and Cys42. NDK stretches follow at residues 201–345 (KEVT…SVPI), 355–491 (IEKT…FPKQ), and 493–629 (TLAV…EVLP). The disordered stretch occupies residues 633-837 (VKDSVASISM…EEKTEEQTAS (205 aa)). Polar residues predominate over residues 638–647 (ASISMEQSQV). Residues 652–670 (EEGGEEQTEQPAGEGEEQQ) are compositionally biased toward acidic residues. 3 stretches are compositionally biased toward low complexity: residues 671 to 707 (AEQP…PPAE), 718 to 752 (QQTQ…AEQT), and 766 to 787 (APAT…QQTQ). The segment covering 805–819 (AGGGEEAVATEGGGE) has biased composition (gly residues). The segment covering 820–837 (GDAKPEGGEEKTEEQTAS) has biased composition (basic and acidic residues).

The protein in the C-terminal section; belongs to the NDK family. Monomer. In terms of tissue distribution, testis-specific. In sperm, it is a component of the arm dynein of sperm axoneme.

In terms of biological role, probably required during the final stages of sperm tail maturation in the testis and/or epididymis, where extensive disulfide bonding of fibrous sheath (FS) proteins occurs. In vitro, it has neither nucleoside diphosphate kinase (NDPK) activity nor reducing activity on disulfide bonds. Exhibits a 3'-5' exonuclease activity with a preference for single-stranded DNA, suggesting roles in DNA proofreading and repair. The sequence is that of Thioredoxin domain-containing protein 3 homolog (NME8) from Heliocidaris crassispina (Sea urchin).